A 168-amino-acid polypeptide reads, in one-letter code: Lipoprotein signal peptidase (168 aa).

The next 3 helical transmembrane spans lie at 15–35, 69–89, and 95–115; these read AIAA…LGLL, WGRW…AVWV, and PLLA…NLID. Residues Asp-124 and Asp-141 contribute to the active site. Residues 133–153 form a helical membrane-spanning segment; it reads FPWVFNIADSGISVGVALLLL.

It belongs to the peptidase A8 family.

It is found in the cell inner membrane. It catalyses the reaction Release of signal peptides from bacterial membrane prolipoproteins. Hydrolyzes -Xaa-Yaa-Zaa-|-(S,diacylglyceryl)Cys-, in which Xaa is hydrophobic (preferably Leu), and Yaa (Ala or Ser) and Zaa (Gly or Ala) have small, neutral side chains.. Its pathway is protein modification; lipoprotein biosynthesis (signal peptide cleavage). Functionally, this protein specifically catalyzes the removal of signal peptides from prolipoproteins. This Caulobacter vibrioides (strain ATCC 19089 / CIP 103742 / CB 15) (Caulobacter crescentus) protein is Lipoprotein signal peptidase.